A 602-amino-acid chain; its full sequence is RecBCD enzyme subunit RecD (602 aa).

ATP is bound at residue 171–178 (GGPGTGKT).

This sequence belongs to the RecD family. As to quaternary structure, heterotrimer of RecB, RecC and RecD. All subunits contribute to DNA-binding.

The enzyme catalyses Couples ATP hydrolysis with the unwinding of duplex DNA at the replication fork by translocating in the 5'-3' direction. This creates two antiparallel DNA single strands (ssDNA). The leading ssDNA polymer is the template for DNA polymerase III holoenzyme which synthesizes a continuous strand.. It catalyses the reaction ATP + H2O = ADP + phosphate + H(+). A helicase/nuclease that prepares dsDNA breaks (DSB) for recombinational DNA repair. Binds to DSBs and unwinds DNA via a highly rapid and processive ATP-dependent bidirectional helicase activity. Unwinds dsDNA until it encounters a Chi (crossover hotspot instigator) sequence from the 3' direction. Cuts ssDNA a few nucleotides 3' to the Chi site. The properties and activities of the enzyme are changed at Chi. The Chi-altered holoenzyme produces a long 3'-ssDNA overhang and facilitates RecA-binding to the ssDNA for homologous DNA recombination and repair. Holoenzyme degrades any linearized DNA that is unable to undergo homologous recombination. In the holoenzyme this subunit has ssDNA-dependent ATPase and 5'-3' helicase activity. When added to pre-assembled RecBC greatly stimulates nuclease activity and augments holoenzyme processivity. Negatively regulates the RecA-loading ability of RecBCD. This is RecBCD enzyme subunit RecD from Buchnera aphidicola subsp. Acyrthosiphon pisum (strain APS) (Acyrthosiphon pisum symbiotic bacterium).